Here is a 350-residue protein sequence, read N- to C-terminus: Glycerol-1-phosphate dehydrogenase [NAD(P)+] (350 aa).

Residues 96-100 (GNIID) and 118-121 (TAPS) contribute to the NAD(+) site. Asp-123 contributes to the substrate binding site. NAD(+) is bound at residue Ser-127. Asp-170 lines the substrate pocket. Asp-170 and His-250 together coordinate Zn(2+). His-254 provides a ligand contact to substrate. Residue His-266 coordinates Zn(2+).

The protein belongs to the glycerol-1-phosphate dehydrogenase family. Homodimer. Zn(2+) serves as cofactor.

It is found in the cytoplasm. It carries out the reaction sn-glycerol 1-phosphate + NAD(+) = dihydroxyacetone phosphate + NADH + H(+). It catalyses the reaction sn-glycerol 1-phosphate + NADP(+) = dihydroxyacetone phosphate + NADPH + H(+). It functions in the pathway membrane lipid metabolism; glycerophospholipid metabolism. In terms of biological role, catalyzes the NAD(P)H-dependent reduction of dihydroxyacetonephosphate (DHAP or glycerone phosphate) to glycerol 1-phosphate (G1P). The G1P thus generated is used as the glycerophosphate backbone of phospholipids in the cellular membranes of Archaea. The polypeptide is Glycerol-1-phosphate dehydrogenase [NAD(P)+] (Sulfurisphaera tokodaii (strain DSM 16993 / JCM 10545 / NBRC 100140 / 7) (Sulfolobus tokodaii)).